The following is a 574-amino-acid chain: C6 finger transcription factor poxB (574 aa).

Residues 19-51 (CDRCRGQKLRCERPVSNSSTTPCRRCLKAHVRC) constitute a DNA-binding region (zn(2)-C6 fungal-type). Disordered stretches follow at residues 111 to 133 (PRRL…GRTR), 242 to 262 (SSLQ…ESRH), and 376 to 404 (LNQT…SASA).

The protein resides in the nucleus. In terms of biological role, transcription factor that positively regulates the expression of the gene cluster that mediates the biosynthesis of oxaleimides, cytotoxic compounds containing an unusual disubstituted succinimide moiety. This chain is C6 finger transcription factor poxB, found in Penicillium oxalicum.